Reading from the N-terminus, the 306-residue chain is Non-specific ribonucleoside hydrolase RihC (306 aa).

The active site involves H235.

Belongs to the IUNH family. RihC subfamily.

Its function is as follows. Hydrolyzes both purine and pyrimidine ribonucleosides with a broad-substrate specificity. The protein is Non-specific ribonucleoside hydrolase RihC of Salmonella typhi.